The sequence spans 219 residues: Protein-L-isoaspartate O-methyltransferase 2 (219 aa).

Residue S67 is part of the active site.

This sequence belongs to the methyltransferase superfamily. L-isoaspartyl/D-aspartyl protein methyltransferase family.

It localises to the cytoplasm. The catalysed reaction is [protein]-L-isoaspartate + S-adenosyl-L-methionine = [protein]-L-isoaspartate alpha-methyl ester + S-adenosyl-L-homocysteine. Its function is as follows. Catalyzes the methyl esterification of L-isoaspartyl residues in peptides and proteins that result from spontaneous decomposition of normal L-aspartyl and L-asparaginyl residues. It plays a role in the repair and/or degradation of damaged proteins. This is Protein-L-isoaspartate O-methyltransferase 2 from Nitrosococcus oceani (strain ATCC 19707 / BCRC 17464 / JCM 30415 / NCIMB 11848 / C-107).